The primary structure comprises 343 residues: Farnesyl pyrophosphate synthase (343 aa).

K49, R52, and Q87 together coordinate isopentenyl diphosphate. Mg(2+) contacts are provided by D94 and D98. R103 serves as a coordination point for dimethylallyl diphosphate. An isopentenyl diphosphate-binding site is contributed by R104. Dimethylallyl diphosphate contacts are provided by K191, T192, Q230, K247, and K256.

It belongs to the FPP/GGPP synthase family. Mg(2+) is required as a cofactor. In terms of tissue distribution, expressed both in apical and sub-apical cells of glandular secretory trichomes.

It is found in the cytoplasm. It localises to the nucleus. The catalysed reaction is isopentenyl diphosphate + dimethylallyl diphosphate = (2E)-geranyl diphosphate + diphosphate. The enzyme catalyses isopentenyl diphosphate + (2E)-geranyl diphosphate = (2E,6E)-farnesyl diphosphate + diphosphate. It functions in the pathway isoprenoid biosynthesis; farnesyl diphosphate biosynthesis; farnesyl diphosphate from geranyl diphosphate and isopentenyl diphosphate: step 1/1. It participates in sesquiterpene biosynthesis. The protein operates within isoprenoid biosynthesis; geranyl diphosphate biosynthesis; geranyl diphosphate from dimethylallyl diphosphate and isopentenyl diphosphate: step 1/1. In terms of biological role, involved in the biosynthesis of the antimalarial endoperoxide artemisinin. Catalyzes the sequential condensation of isopentenyl pyrophosphate with the allylic pyrophosphates, dimethylallyl pyrophosphate, and then with the resultant geranylpyrophosphate to the ultimate product farnesyl pyrophosphate. Promotes anti-malarial and antimicrobial (toward Gram-positive bacteria B.subtilis and S.aureus) activities of plant crude extract probably by triggering artemisinin levels. In Artemisia annua (Sweet wormwood), this protein is Farnesyl pyrophosphate synthase.